The chain runs to 788 residues: Probable phosphoketolase 1 (788 aa).

Belongs to the XFP family. Thiamine diphosphate serves as cofactor.

In Lactiplantibacillus plantarum (strain ATCC BAA-793 / NCIMB 8826 / WCFS1) (Lactobacillus plantarum), this protein is Probable phosphoketolase 1.